Consider the following 142-residue polypeptide: Large ribosomal subunit protein uL11 (142 aa).

It belongs to the universal ribosomal protein uL11 family. As to quaternary structure, part of the ribosomal stalk of the 50S ribosomal subunit. Interacts with L10 and the large rRNA to form the base of the stalk. L10 forms an elongated spine to which L12 dimers bind in a sequential fashion forming a multimeric L10(L12)X complex. In terms of processing, one or more lysine residues are methylated.

Functionally, forms part of the ribosomal stalk which helps the ribosome interact with GTP-bound translation factors. This is Large ribosomal subunit protein uL11 from Cronobacter sakazakii (strain ATCC BAA-894) (Enterobacter sakazakii).